Reading from the N-terminus, the 246-residue chain is MIRMNISVRNLKEITDLLSTIVSEAKFKVDENGMSVTAVDPAHVAMIRLEVPKEVFSEFRSDGTEEIALDIDRLKSVIRLANSSENVGITKDKEKLKFDLGNISKSVSLLDPSTIVTPKIPNIASEYYAIIKRSDFERGLRAAEDISDSIRFVLSSEGFRATSHSESEESEMVLPKDMLSDLSCSDTIKSSYPLEYLLKFIKAVSSADSLKISFRDDYPLSIEFYLDQNPSAKIKGLFLLAPRMEQ.

The protein belongs to the PCNA family. In terms of assembly, homotrimer. The subunits circularize to form a toroid; DNA passes through its center. Replication factor C (RFC) is required to load the toroid on the DNA.

In terms of biological role, sliding clamp subunit that acts as a moving platform for DNA processing. Responsible for tethering the catalytic subunit of DNA polymerase and other proteins to DNA during high-speed replication. The polypeptide is DNA polymerase sliding clamp (Thermoplasma volcanium (strain ATCC 51530 / DSM 4299 / JCM 9571 / NBRC 15438 / GSS1)).